Consider the following 139-residue polypeptide: ATP synthase epsilon chain (139 aa).

It belongs to the ATPase epsilon chain family. As to quaternary structure, F-type ATPases have 2 components, CF(1) - the catalytic core - and CF(0) - the membrane proton channel. CF(1) has five subunits: alpha(3), beta(3), gamma(1), delta(1), epsilon(1). CF(0) has three main subunits: a, b and c.

The protein resides in the cell inner membrane. Functionally, produces ATP from ADP in the presence of a proton gradient across the membrane. This is ATP synthase epsilon chain from Pseudomonas entomophila (strain L48).